A 228-amino-acid chain; its full sequence is N-acetyltransferase family 8 member 3 (228 aa).

A run of 2 helical transmembrane segments spans residues 36-56 and 58-78; these read MLLLPGTLLILLGVPLTLFLA and GSWLLVLLSTLTLLVSLWLLA. In terms of domain architecture, N-acetyltransferase spans 61–217; sequence LLVLLSTLTL…RNSPMICLKY (157 aa).

Belongs to the camello family.

The protein resides in the nucleus membrane. It localises to the cytoplasm. It is found in the perinuclear region. The catalysed reaction is L-lysyl-[protein] + acetyl-CoA = N(6)-acetyl-L-lysyl-[protein] + CoA + H(+). Functionally, has histone acetyltransferase activity in vitro, with specificity for histone H4. The protein is N-acetyltransferase family 8 member 3 of Rattus norvegicus (Rat).